The following is a 390-amino-acid chain: tRNA(Met) cytidine acetate ligase (390 aa).

ATP-binding positions include 7–20 (VVEYNPFHNGHKLH), G101, N162, and R187.

This sequence belongs to the TmcAL family.

Its subcellular location is the cytoplasm. It carries out the reaction cytidine(34) in elongator tRNA(Met) + acetate + ATP = N(4)-acetylcytidine(34) in elongator tRNA(Met) + AMP + diphosphate. In terms of biological role, catalyzes the formation of N(4)-acetylcytidine (ac(4)C) at the wobble position of elongator tRNA(Met), using acetate and ATP as substrates. First activates an acetate ion to form acetyladenylate (Ac-AMP) and then transfers the acetyl group to tRNA to form ac(4)C34. The protein is tRNA(Met) cytidine acetate ligase of Listeria monocytogenes serotype 4b (strain CLIP80459).